Here is a 76-residue protein sequence, read N- to C-terminus: Exodeoxyribonuclease 7 small subunit (76 aa).

It belongs to the XseB family. Heterooligomer composed of large and small subunits.

The protein localises to the cytoplasm. The catalysed reaction is Exonucleolytic cleavage in either 5'- to 3'- or 3'- to 5'-direction to yield nucleoside 5'-phosphates.. Its function is as follows. Bidirectionally degrades single-stranded DNA into large acid-insoluble oligonucleotides, which are then degraded further into small acid-soluble oligonucleotides. This Staphylococcus aureus (strain Mu3 / ATCC 700698) protein is Exodeoxyribonuclease 7 small subunit.